The chain runs to 310 residues: MTDKLPLALFLMGPTASGKTELAIRLRQKFPVEIISVDSALIYKGMDIGTAKPDERELSLAPHRLIDILDPSESYSAADFRRDALQAMDDIVAEGKIPLLVGGTMLYYKALLEGLSPLPAANPEIRQQIEQEALTKGWSVLHDELKEIDPVSAARIHPNDPQRLSRALEVYRISGKTLTELTQTKGESLPYRVKQFAIAPKDRAELHRRIELRFDKMMEAGFEEEMKALYARKDLHPDLPSIRCVGYRQMWEYLDGECTRDEAVFRGVCATRQLAKRQITWLRSWDDLTWLDSDNIEQALETMSEAIASD.

Residue 13-20 (GPTASGKT) participates in ATP binding. 15–20 (TASGKT) serves as a coordination point for substrate. Interaction with substrate tRNA regions lie at residues 38-41 (DSAL), 162-166 (QRLSR), 243-248 (RCVGYR), and 276-283 (KRQITWLR).

This sequence belongs to the IPP transferase family. Monomer. The cofactor is Mg(2+).

The enzyme catalyses adenosine(37) in tRNA + dimethylallyl diphosphate = N(6)-dimethylallyladenosine(37) in tRNA + diphosphate. In terms of biological role, catalyzes the transfer of a dimethylallyl group onto the adenine at position 37 in tRNAs that read codons beginning with uridine, leading to the formation of N6-(dimethylallyl)adenosine (i(6)A). The chain is tRNA dimethylallyltransferase from Vibrio parahaemolyticus serotype O3:K6 (strain RIMD 2210633).